A 391-amino-acid polypeptide reads, in one-letter code: Processive diacylglycerol beta-glucosyltransferase (391 aa).

Belongs to the glycosyltransferase 28 family. UgtP subfamily.

The protein resides in the cell membrane. It carries out the reaction a 1,2-diacyl-3-O-(beta-D-glucopyranosyl)-sn-glycerol + UDP-alpha-D-glucose = a 1,2-diacyl-3-O-(beta-D-Glc-(1-&gt;6)-beta-D-Glc)-sn-glycerol + UDP + H(+). The enzyme catalyses a 1,2-diacyl-sn-glycerol + UDP-alpha-D-glucose = a 1,2-diacyl-3-O-(beta-D-glucopyranosyl)-sn-glycerol + UDP + H(+). It functions in the pathway glycolipid metabolism; diglucosyl-diacylglycerol biosynthesis. Its function is as follows. Processive glucosyltransferase involved in the biosynthesis of both the bilayer- and non-bilayer-forming membrane glucolipids. Is able to successively transfer two glucosyl residues to diacylglycerol (DAG), thereby catalyzing the formation of beta-monoglucosyl-DAG (3-O-(beta-D-glucopyranosyl)-1,2-diacyl-sn-glycerol) and beta-diglucosyl-DAG (3-O-(beta-D-glucopyranosyl-beta-(1-&gt;6)-D-glucopyranosyl)-1,2-diacyl-sn-glycerol). Beta-diglucosyl-DAG is the predominant glycolipid found in Bacillales and is also used as a membrane anchor for lipoteichoic acid (LTA). This chain is Processive diacylglycerol beta-glucosyltransferase, found in Staphylococcus aureus (strain bovine RF122 / ET3-1).